A 148-amino-acid chain; its full sequence is Lysozyme C-1 (148 aa).

The N-terminal stretch at 1-18 (MKALLTLGLLLLSVTAQA) is a signal peptide. The C-type lysozyme domain maps to 19–148 (KVYNRCELAR…LSQYIRNCGV (130 aa)). Disulfide bonds link cysteine 24–cysteine 146, cysteine 48–cysteine 134, cysteine 83–cysteine 99, and cysteine 95–cysteine 113. Catalysis depends on residues glutamate 53 and aspartate 71.

The protein belongs to the glycosyl hydrolase 22 family. In terms of assembly, monomer. Expressed strongly only in small intestine.

It localises to the secreted. The enzyme catalyses Hydrolysis of (1-&gt;4)-beta-linkages between N-acetylmuramic acid and N-acetyl-D-glucosamine residues in a peptidoglycan and between N-acetyl-D-glucosamine residues in chitodextrins.. Functionally, lysozymes have primarily a bacteriolytic function; those in tissues and body fluids are associated with the monocyte-macrophage system and enhance the activity of immunoagents. Lyz1 is active against a range of Gram-positive and Gram-negative bacteria. Less effective than Lyz2 in killing Gram-negative bacteria. Lyz1 and Lyz2 are equally effective in killing Gram-positive bacteria. The protein is Lysozyme C-1 (Lyz1) of Mus musculus (Mouse).